Consider the following 440-residue polypeptide: tRNA(Ile)-lysidine synthase (440 aa).

Residue 28-33 (SGGMDS) coordinates ATP.

The protein belongs to the tRNA(Ile)-lysidine synthase family.

It localises to the cytoplasm. The catalysed reaction is cytidine(34) in tRNA(Ile2) + L-lysine + ATP = lysidine(34) in tRNA(Ile2) + AMP + diphosphate + H(+). Ligates lysine onto the cytidine present at position 34 of the AUA codon-specific tRNA(Ile) that contains the anticodon CAU, in an ATP-dependent manner. Cytidine is converted to lysidine, thus changing the amino acid specificity of the tRNA from methionine to isoleucine. This Xanthomonas axonopodis pv. citri (strain 306) protein is tRNA(Ile)-lysidine synthase.